Consider the following 65-residue polypeptide: Large ribosomal subunit protein bL35 (65 aa).

The disordered stretch occupies residues 20–42 (GKVRRHHANASHIMTTKTTKRKR).

The protein belongs to the bacterial ribosomal protein bL35 family.

This is Large ribosomal subunit protein bL35 from Syntrophus aciditrophicus (strain SB).